We begin with the raw amino-acid sequence, 255 residues long: Thiazole synthase (255 aa).

Residue lysine 96 is the Schiff-base intermediate with DXP of the active site. 1-deoxy-D-xylulose 5-phosphate contacts are provided by residues glycine 157, 183–184 (AG), and 205–206 (NT).

This sequence belongs to the ThiG family. Homotetramer. Forms heterodimers with either ThiH or ThiS.

It is found in the cytoplasm. The catalysed reaction is [ThiS sulfur-carrier protein]-C-terminal-Gly-aminoethanethioate + 2-iminoacetate + 1-deoxy-D-xylulose 5-phosphate = [ThiS sulfur-carrier protein]-C-terminal Gly-Gly + 2-[(2R,5Z)-2-carboxy-4-methylthiazol-5(2H)-ylidene]ethyl phosphate + 2 H2O + H(+). It functions in the pathway cofactor biosynthesis; thiamine diphosphate biosynthesis. Its function is as follows. Catalyzes the rearrangement of 1-deoxy-D-xylulose 5-phosphate (DXP) to produce the thiazole phosphate moiety of thiamine. Sulfur is provided by the thiocarboxylate moiety of the carrier protein ThiS. In vitro, sulfur can be provided by H(2)S. In Staphylococcus epidermidis (strain ATCC 12228 / FDA PCI 1200), this protein is Thiazole synthase.